Consider the following 199-residue polypeptide: dTTP/UTP pyrophosphatase (199 aa).

D78 (proton acceptor) is an active-site residue.

Belongs to the Maf family. YhdE subfamily. The cofactor is a divalent metal cation.

The protein resides in the cytoplasm. The enzyme catalyses dTTP + H2O = dTMP + diphosphate + H(+). The catalysed reaction is UTP + H2O = UMP + diphosphate + H(+). In terms of biological role, nucleoside triphosphate pyrophosphatase that hydrolyzes dTTP and UTP. May have a dual role in cell division arrest and in preventing the incorporation of modified nucleotides into cellular nucleic acids. This Clostridium acetobutylicum (strain ATCC 824 / DSM 792 / JCM 1419 / IAM 19013 / LMG 5710 / NBRC 13948 / NRRL B-527 / VKM B-1787 / 2291 / W) protein is dTTP/UTP pyrophosphatase.